The primary structure comprises 123 residues: Large ribosomal subunit protein bL17 (123 aa).

Belongs to the bacterial ribosomal protein bL17 family. In terms of assembly, part of the 50S ribosomal subunit. Contacts protein L32.

The protein is Large ribosomal subunit protein bL17 of Borreliella burgdorferi (strain ZS7) (Borrelia burgdorferi).